A 154-amino-acid polypeptide reads, in one-letter code: MNRIEGHLLAADLRFAIVSTRWNHLIVDRLVEGAELAFVQHGGKSENLDHFIVPGSHELPLVARRLAETGKYDAVVCLGAVIRGDTDHYKFVAGGAASGILNSALHTGVPIAFGVLTTETVEQALNRAGIKAGNKGAEATLAMIETVNLLRQIR.

Residues tryptophan 22, 56-58 (SHE), and 80-82 (AVI) each bind 5-amino-6-(D-ribitylamino)uracil. (2S)-2-hydroxy-3-oxobutyl phosphate is bound at residue 85–86 (DT). Histidine 88 (proton donor) is an active-site residue. Residue phenylalanine 113 coordinates 5-amino-6-(D-ribitylamino)uracil. A (2S)-2-hydroxy-3-oxobutyl phosphate-binding site is contributed by arginine 127.

Belongs to the DMRL synthase family.

It catalyses the reaction (2S)-2-hydroxy-3-oxobutyl phosphate + 5-amino-6-(D-ribitylamino)uracil = 6,7-dimethyl-8-(1-D-ribityl)lumazine + phosphate + 2 H2O + H(+). It functions in the pathway cofactor biosynthesis; riboflavin biosynthesis; riboflavin from 2-hydroxy-3-oxobutyl phosphate and 5-amino-6-(D-ribitylamino)uracil: step 1/2. In terms of biological role, catalyzes the formation of 6,7-dimethyl-8-ribityllumazine by condensation of 5-amino-6-(D-ribitylamino)uracil with 3,4-dihydroxy-2-butanone 4-phosphate. This is the penultimate step in the biosynthesis of riboflavin. This chain is 6,7-dimethyl-8-ribityllumazine synthase, found in Deinococcus geothermalis (strain DSM 11300 / CIP 105573 / AG-3a).